The primary structure comprises 974 residues: Alpha-1,4 glucan phosphorylase L-2 isozyme, chloroplastic/amyloplastic (974 aa).

The N-terminal 81 residues, 1–81 (MATFAVSGLN…LDVFQPDSTS (81 aa)), are a transit peptide targeting the chloroplast. Positions 509 to 551 (ADVEKAADEEQEEEGKDDSKDEETEAVKAETTNEEEETEVKKV) are disordered. Acidic residues predominate over residues 517 to 532 (EEQEEEGKDDSKDEET). N6-(pyridoxal phosphate)lysine is present on K820.

Belongs to the glycogen phosphorylase family. It depends on pyridoxal 5'-phosphate as a cofactor. As to expression, leaves.

The protein resides in the plastid. Its subcellular location is the chloroplast. The protein localises to the amyloplast. The catalysed reaction is [(1-&gt;4)-alpha-D-glucosyl](n) + phosphate = [(1-&gt;4)-alpha-D-glucosyl](n-1) + alpha-D-glucose 1-phosphate. Phosphorylase is an important allosteric enzyme in carbohydrate metabolism. Enzymes from different sources differ in their regulatory mechanisms and in their natural substrates. However, all known phosphorylases share catalytic and structural properties. The sequence is that of Alpha-1,4 glucan phosphorylase L-2 isozyme, chloroplastic/amyloplastic (STP-1) from Solanum tuberosum (Potato).